We begin with the raw amino-acid sequence, 407 residues long: uncharacterized protein (407 aa).

2 coiled-coil regions span residues 96 to 130 (TDSI…FKNE) and 287 to 345 (MKCY…AKTS). The span at 302 to 317 (EKRKDNLQKQNEEAAK) shows a compositional bias: basic and acidic residues. The disordered stretch occupies residues 302-394 (EKRKDNLQKQ…NMDPAINESD (93 aa)). Basic residues predominate over residues 318–331 (ITKRKNRQEKRREK). Over residues 344–370 (TSVSSIPDTSSTTTSTNSTPTNTKSNS) the composition is skewed to low complexity.

This is an uncharacterized protein from Acanthamoeba polyphaga (Amoeba).